The chain runs to 139 residues: Small ribosomal subunit protein uS12 (139 aa).

The protein belongs to the universal ribosomal protein uS12 family. Part of the 30S ribosomal subunit. Contacts proteins S8 and S17. May interact with IF1 in the 30S initiation complex.

Its function is as follows. With S4 and S5 plays an important role in translational accuracy. In terms of biological role, interacts with and stabilizes bases of the 16S rRNA that are involved in tRNA selection in the A site and with the mRNA backbone. Located at the interface of the 30S and 50S subunits, it traverses the body of the 30S subunit contacting proteins on the other side and probably holding the rRNA structure together. The combined cluster of proteins S8, S12 and S17 appears to hold together the shoulder and platform of the 30S subunit. This is Small ribosomal subunit protein uS12 from Mycoplasma pneumoniae (strain ATCC 29342 / M129 / Subtype 1) (Mycoplasmoides pneumoniae).